A 349-amino-acid chain; its full sequence is MSGWHHRHILDLASFSRDDFASILELAQRFRSLPVTGVRKLPALQGRLVATLFFEPSTRTRSSFELAAKRLSADVMSFSPSSSSLSKGESVLDTARTYVAMGADVLVVRHRSTSVPQQLAADLDQLGERTVVLNGGDGLHSHPSQGLLDLLTLARYFDAQKPTPQALDGKKIVIVGDILHSRVARSNLWALTGCGADVVLCGPTSLLPEEFAAFVDAPPPGLSCDPVAQRGKVTVERRLEQALPGADAVMTLRLQKERMTQQLLTSLERYHRDYGLSHARLQLCGRQVPVLHPGPVNRGVEMTSQLLDDPTICLVEEQVRNGVPVRMALLYLMAAAESAAESSLVSISS.

Residues Arg59 and Thr60 each contribute to the carbamoyl phosphate site. An L-aspartate-binding site is contributed by Lys87. Residues Arg109, His142, and Gln145 each contribute to the carbamoyl phosphate site. Arg182 and Arg253 together coordinate L-aspartate. Gly294 and Pro295 together coordinate carbamoyl phosphate.

This sequence belongs to the aspartate/ornithine carbamoyltransferase superfamily. ATCase family. As to quaternary structure, heterododecamer (2C3:3R2) of six catalytic PyrB chains organized as two trimers (C3), and six regulatory PyrI chains organized as three dimers (R2).

It catalyses the reaction carbamoyl phosphate + L-aspartate = N-carbamoyl-L-aspartate + phosphate + H(+). It participates in pyrimidine metabolism; UMP biosynthesis via de novo pathway; (S)-dihydroorotate from bicarbonate: step 2/3. In terms of biological role, catalyzes the condensation of carbamoyl phosphate and aspartate to form carbamoyl aspartate and inorganic phosphate, the committed step in the de novo pyrimidine nucleotide biosynthesis pathway. In Synechococcus sp. (strain CC9902), this protein is Aspartate carbamoyltransferase catalytic subunit.